A 441-amino-acid chain; its full sequence is Glutamyl-tRNA reductase (441 aa).

Residues threonine 49–arginine 52, serine 109, glutamate 114–glutamine 116, and glutamine 120 contribute to the substrate site. Cysteine 50 acts as the Nucleophile in catalysis. Residue glycine 190–serine 195 participates in NADP(+) binding.

Belongs to the glutamyl-tRNA reductase family. Homodimer.

It carries out the reaction (S)-4-amino-5-oxopentanoate + tRNA(Glu) + NADP(+) = L-glutamyl-tRNA(Glu) + NADPH + H(+). It functions in the pathway porphyrin-containing compound metabolism; protoporphyrin-IX biosynthesis; 5-aminolevulinate from L-glutamyl-tRNA(Glu): step 1/2. In terms of biological role, catalyzes the NADPH-dependent reduction of glutamyl-tRNA(Glu) to glutamate 1-semialdehyde (GSA). The chain is Glutamyl-tRNA reductase from Moorella thermoacetica (strain ATCC 39073 / JCM 9320).